The primary structure comprises 445 residues: Phosphoglucosamine mutase (445 aa).

Serine 102 serves as the catalytic Phosphoserine intermediate. Serine 102, aspartate 241, aspartate 243, and aspartate 245 together coordinate Mg(2+). The residue at position 102 (serine 102) is a Phosphoserine.

Belongs to the phosphohexose mutase family. Mg(2+) serves as cofactor. Activated by phosphorylation.

The enzyme catalyses alpha-D-glucosamine 1-phosphate = D-glucosamine 6-phosphate. Functionally, catalyzes the conversion of glucosamine-6-phosphate to glucosamine-1-phosphate. In Escherichia coli (strain 55989 / EAEC), this protein is Phosphoglucosamine mutase.